The sequence spans 111 residues: Large ribosomal subunit protein uL22 (111 aa).

It belongs to the universal ribosomal protein uL22 family. In terms of assembly, part of the 50S ribosomal subunit.

Functionally, this protein binds specifically to 23S rRNA; its binding is stimulated by other ribosomal proteins, e.g. L4, L17, and L20. It is important during the early stages of 50S assembly. It makes multiple contacts with different domains of the 23S rRNA in the assembled 50S subunit and ribosome. Its function is as follows. The globular domain of the protein is located near the polypeptide exit tunnel on the outside of the subunit, while an extended beta-hairpin is found that lines the wall of the exit tunnel in the center of the 70S ribosome. This is Large ribosomal subunit protein uL22 from Geotalea daltonii (strain DSM 22248 / JCM 15807 / FRC-32) (Geobacter daltonii).